The chain runs to 132 residues: Small ribosomal subunit protein uS8 (132 aa).

It belongs to the universal ribosomal protein uS8 family. In terms of assembly, part of the 30S ribosomal subunit. Contacts proteins S5 and S12.

Its function is as follows. One of the primary rRNA binding proteins, it binds directly to 16S rRNA central domain where it helps coordinate assembly of the platform of the 30S subunit. This chain is Small ribosomal subunit protein uS8, found in Bradyrhizobium sp. (strain ORS 278).